A 147-amino-acid chain; its full sequence is Ribonuclease H (147 aa).

One can recognise an RNase H type-1 domain in the interval 3–145 (TEDRVEIYTD…ADQLANKGVE (143 aa)). Mg(2+)-binding residues include Asp12, Glu50, Asp72, and Asp137.

It belongs to the RNase H family. As to quaternary structure, monomer. It depends on Mg(2+) as a cofactor.

The protein resides in the cytoplasm. The enzyme catalyses Endonucleolytic cleavage to 5'-phosphomonoester.. In terms of biological role, endonuclease that specifically degrades the RNA of RNA-DNA hybrids. The chain is Ribonuclease H from Chromobacterium violaceum (strain ATCC 12472 / DSM 30191 / JCM 1249 / CCUG 213 / NBRC 12614 / NCIMB 9131 / NCTC 9757 / MK).